The chain runs to 96 residues: Nucleoid-associated protein CF0672 (96 aa).

This sequence belongs to the YbaB/EbfC family. As to quaternary structure, homodimer.

It localises to the cytoplasm. Its subcellular location is the nucleoid. Its function is as follows. Binds to DNA and alters its conformation. May be involved in regulation of gene expression, nucleoid organization and DNA protection. This Chlamydia felis (strain Fe/C-56) (Chlamydophila felis) protein is Nucleoid-associated protein CF0672.